The primary structure comprises 517 residues: Cell division cycle protein 73 (517 aa).

The span at 124–135 shows a compositional bias: basic and acidic residues; that stretch reads SEPEAKKPRLDG. Disordered regions lie at residues 124–159 and 306–326; these read SEPE…SAAK and GHHA…LAKP. The segment covering 315-324 has biased composition (pro residues); the sequence is DAPPGRPPLA.

This sequence belongs to the CDC73 family. As to quaternary structure, component of the PAF1 complex which consists of at least cdc-73, ctr-9, leo-1, pafo-1 and rtfo-1.

It is found in the nucleus. Its function is as follows. Component of the PAF1 complex which is a multifunctional complex involved in transcription initiation via genetic interactions with TATA-binding proteins, elongation and transcription-coupled histone modification. The sequence is that of Cell division cycle protein 73 from Caenorhabditis elegans.